We begin with the raw amino-acid sequence, 339 residues long: DNA-directed RNA polymerase subunit alpha (339 aa).

The segment at 1–233 is alpha N-terminal domain (alpha-NTD); that stretch reads MVREEVAGST…DLFLPFLHAE (233 aa). The tract at residues 264–339 is alpha C-terminal domain (alpha-CTD); it reads KKGIPLNCIF…IDLLKNKLSF (76 aa).

The protein belongs to the RNA polymerase alpha chain family. In terms of assembly, in plastids the minimal PEP RNA polymerase catalytic core is composed of four subunits: alpha, beta, beta', and beta''. When a (nuclear-encoded) sigma factor is associated with the core the holoenzyme is formed, which can initiate transcription.

The protein localises to the plastid. Its subcellular location is the chloroplast. It carries out the reaction RNA(n) + a ribonucleoside 5'-triphosphate = RNA(n+1) + diphosphate. Functionally, DNA-dependent RNA polymerase catalyzes the transcription of DNA into RNA using the four ribonucleoside triphosphates as substrates. The protein is DNA-directed RNA polymerase subunit alpha of Australopyrum velutinum (Mountain wheat-grass).